Consider the following 341-residue polypeptide: Glycerol-3-phosphate dehydrogenase [NAD(P)+] (341 aa).

NADPH contacts are provided by S14, F15, R35, and K108. The sn-glycerol 3-phosphate site is built by K108 and G136. Position 140 (A140) interacts with NADPH. Sn-glycerol 3-phosphate contacts are provided by K191, D244, S254, R255, and N256. Residue K191 is the Proton acceptor of the active site. R255 contributes to the NADPH binding site. Positions 279 and 281 each coordinate NADPH.

It belongs to the NAD-dependent glycerol-3-phosphate dehydrogenase family.

Its subcellular location is the cytoplasm. It catalyses the reaction sn-glycerol 3-phosphate + NAD(+) = dihydroxyacetone phosphate + NADH + H(+). The catalysed reaction is sn-glycerol 3-phosphate + NADP(+) = dihydroxyacetone phosphate + NADPH + H(+). The protein operates within membrane lipid metabolism; glycerophospholipid metabolism. Functionally, catalyzes the reduction of the glycolytic intermediate dihydroxyacetone phosphate (DHAP) to sn-glycerol 3-phosphate (G3P), the key precursor for phospholipid synthesis. The polypeptide is Glycerol-3-phosphate dehydrogenase [NAD(P)+] (Pseudomonas fluorescens (strain ATCC BAA-477 / NRRL B-23932 / Pf-5)).